The following is a 320-amino-acid chain: MAFAKISQVAHYAPAQVVTDDDLSKIMDTSDEWIRSRTGIQERRISLNENTSDLATNVAYQLLEKSGLSPEELDFVLVATISPDNSMPSVAARVQGTIGAVNAFAFDITAACSGFVFALATAEKLIKSGAYKKGLVIGAEVLSKTLDWSDRATAVLFGDGAGGVLLEESEEEHFFGESLNTDGSKGGLESGASAVISPYSDGTEQPNPYMQMDGKAIFDFAVKTVSKSIKALVEEKGEPDYFLLHQANIRILDTMAKKIDVSRDKFLANMMSYGNTSAASIPILLSENVANETLKLGSDQTILLSGFGGGLTWGSLIVKI.

Residues Cys112 and His245 contribute to the active site. The ACP-binding stretch occupies residues 246–250; the sequence is QANIR. Residue Asn275 is part of the active site.

The protein belongs to the thiolase-like superfamily. FabH family. Homodimer.

The protein localises to the cytoplasm. The enzyme catalyses malonyl-[ACP] + acetyl-CoA + H(+) = 3-oxobutanoyl-[ACP] + CO2 + CoA. It functions in the pathway lipid metabolism; fatty acid biosynthesis. In terms of biological role, catalyzes the condensation reaction of fatty acid synthesis by the addition to an acyl acceptor of two carbons from malonyl-ACP. Catalyzes the first condensation reaction which initiates fatty acid synthesis and may therefore play a role in governing the total rate of fatty acid production. Possesses both acetoacetyl-ACP synthase and acetyl transacylase activities. Its substrate specificity determines the biosynthesis of branched-chain and/or straight-chain of fatty acids. The chain is Beta-ketoacyl-[acyl-carrier-protein] synthase III from Streptococcus thermophilus (strain ATCC BAA-250 / LMG 18311).